We begin with the raw amino-acid sequence, 282 residues long: Lipoyl synthase (282 aa).

Residues Cys-37, Cys-42, Cys-48, Cys-63, Cys-67, Cys-70, and Ser-275 each contribute to the [4Fe-4S] cluster site. Positions 49 to 264 (WSRGTATFMI…RLVGIEKGFR (216 aa)) constitute a Radical SAM core domain.

The protein belongs to the radical SAM superfamily. Lipoyl synthase family. Requires [4Fe-4S] cluster as cofactor.

It is found in the cytoplasm. The enzyme catalyses [[Fe-S] cluster scaffold protein carrying a second [4Fe-4S](2+) cluster] + N(6)-octanoyl-L-lysyl-[protein] + 2 oxidized [2Fe-2S]-[ferredoxin] + 2 S-adenosyl-L-methionine + 4 H(+) = [[Fe-S] cluster scaffold protein] + N(6)-[(R)-dihydrolipoyl]-L-lysyl-[protein] + 4 Fe(3+) + 2 hydrogen sulfide + 2 5'-deoxyadenosine + 2 L-methionine + 2 reduced [2Fe-2S]-[ferredoxin]. It participates in protein modification; protein lipoylation via endogenous pathway; protein N(6)-(lipoyl)lysine from octanoyl-[acyl-carrier-protein]: step 2/2. Its function is as follows. Catalyzes the radical-mediated insertion of two sulfur atoms into the C-6 and C-8 positions of the octanoyl moiety bound to the lipoyl domains of lipoate-dependent enzymes, thereby converting the octanoylated domains into lipoylated derivatives. The sequence is that of Lipoyl synthase from Porphyromonas gingivalis (strain ATCC 33277 / DSM 20709 / CIP 103683 / JCM 12257 / NCTC 11834 / 2561).